Here is a 758-residue protein sequence, read N- to C-terminus: G-protein alpha subunit activating protein gbas-1 (758 aa).

Residues 30–48 are compositionally biased toward acidic residues; the sequence is LDEVDNADFEREDDEEEVL. Positions 30–70 are disordered; it reads LDEVDNADFEREDDEEEVLSEPSESPYTSTPKSSKRVNKTR. Positions 49 to 61 are enriched in low complexity; sequence SEPSESPYTSTPK. Positions 653 to 666 match the GBA motif; that stretch reads ETVTVEEFLMNSYS. Positions 668–690 are disordered; the sequence is AAPSTSTAPAPPKAPVTAPPAPQ. The span at 676–689 shows a compositional bias: pro residues; the sequence is PAPPKAPVTAPPAP.

As to quaternary structure, interacts (via GBA motif) with guanine nucleotide-binding protein G(o) subunit alpha goa-1 (in GDP-bound form); the interaction leads to activation of goa-1. In terms of tissue distribution, expressed in some neurons including the head and tail neurons, HSN and VC, in a subset of glial cells, in the distal tips cells and in the intestine.

Its function is as follows. Acts as a non-receptor guanine nucleotide exchange factor which binds to and activates G-protein alpha subunit goa-1. The sequence is that of G-protein alpha subunit activating protein gbas-1 from Caenorhabditis elegans.